The chain runs to 188 residues: tRNA(Phe) 7-((3-amino-3-carboxypropyl)-4-demethylwyosine(37)-N(4))-methyltransferase (188 aa).

The protein belongs to the TYW3 family.

The enzyme catalyses 4-demethyl-7-[(3S)-3-amino-3-carboxypropyl]wyosine(37) in tRNA(Phe) + S-adenosyl-L-methionine = 7-[(3S)-3-amino-3-carboxypropyl]wyosine(37) in tRNA(Phe) + S-adenosyl-L-homocysteine + H(+). Functionally, S-adenosyl-L-methionine-dependent methyltransferase that acts as a component of the wyosine derivatives biosynthesis pathway. Probably methylates N-4 position of wybutosine-86 to produce wybutosine-72. This chain is tRNA(Phe) 7-((3-amino-3-carboxypropyl)-4-demethylwyosine(37)-N(4))-methyltransferase, found in Aeropyrum pernix (strain ATCC 700893 / DSM 11879 / JCM 9820 / NBRC 100138 / K1).